The primary structure comprises 444 residues: Platelet-activating factor acetylhydrolase (444 aa).

Residues 1-21 form the signal peptide; the sequence is MLPPKLHALFCLCSCLTLVHP. Asparagine 60 and asparagine 200 each carry an N-linked (GlcNAc...) asparagine glycan. Serine 274 acts as the Nucleophile in catalysis. Active-site charge relay system residues include aspartate 297 and histidine 352. Asparagine 424 is a glycosylation site (N-linked (GlcNAc...) asparagine).

This sequence belongs to the AB hydrolase superfamily. Lipase family. In terms of processing, N-glycosylated. As to expression, plasma.

The protein resides in the secreted. It localises to the extracellular space. It catalyses the reaction a 1-O-alkyl-2-acetyl-sn-glycero-3-phosphocholine + H2O = a 1-O-alkyl-sn-glycero-3-phosphocholine + acetate + H(+). The enzyme catalyses 1-O-decyl-2-acetyl-sn-glycero-3-phosphocholine + H2O = 1-O-decyl-sn-glycero-3-phosphocholine + acetate + H(+). The catalysed reaction is 1-O-dodecyl-2-acetyl-sn-glycero-3-phosphocholine + H2O = 1-O-dodecyl-sn-glycero-3-phosphocholine + acetate + H(+). It carries out the reaction 1-O-tetradecyl-2-acetyl-sn-glycero-3-phosphocholine + H2O = 1-O-tetradecyl-sn-glycero-3-phosphocholine + acetate + H(+). It catalyses the reaction 1-O-hexadecyl-2-acetyl-sn-glycero-3-phosphocholine + H2O = 1-O-hexadecyl-sn-glycero-3-phosphocholine + acetate + H(+). The enzyme catalyses 1-O-octadecyl-2-acetyl-sn-glycero-3-phosphocholine + H2O = 1-O-octadecyl-sn-glycero-3-phosphocholine + acetate + H(+). The catalysed reaction is 1-hexadecanoyl-2-acetyl-sn-glycero-3-phosphocholine + H2O = 1-hexadecanoyl-sn-glycero-3-phosphocholine + acetate + H(+). It carries out the reaction 1-hexadecanoyl-2-propionyl-sn-glycero-3-phosphocholine + H2O = propanoate + 1-hexadecanoyl-sn-glycero-3-phosphocholine + H(+). It catalyses the reaction 1-hexadecanoyl-2-butanoyl-sn-glycero-3-phosphocholine + H2O = butanoate + 1-hexadecanoyl-sn-glycero-3-phosphocholine + H(+). The enzyme catalyses 1-hexadecanoyl-2-pentanoyl-sn-glycero-3-phosphocholine + H2O = pentanoate + 1-hexadecanoyl-sn-glycero-3-phosphocholine + H(+). The catalysed reaction is 1-hexadecanoyl-2-glutaroyl-sn-glycero-3-phosphocholine + H2O = glutarate + 1-hexadecanoyl-sn-glycero-3-phosphocholine + H(+). It carries out the reaction 1-hexadecanoyl-2-(5-oxopentanoyl)-sn-glycero-3-phosphocholine + H2O = 5-oxopentanoate + 1-hexadecanoyl-sn-glycero-3-phosphocholine + H(+). It catalyses the reaction 1-hexadecanoyl-2-(9-oxononanoyl)-sn-glycero-3-phosphocholine + H2O = 9-oxononanoate + 1-hexadecanoyl-sn-glycero-3-phosphocholine + H(+). The enzyme catalyses 1-hexadecanoyl-2-[9-hydroperoxy-(10E-octadecenoyl)]-sn-glycero-3-phosphocholine + H2O = 9-hydroperoxy-10E-octadecenoate + 1-hexadecanoyl-sn-glycero-3-phosphocholine + H(+). The catalysed reaction is 1-hexadecanoyl-2-(10-hydroperoxy-8E-octadecenoyl)-sn-glycero-3-phosphocholine + H2O = 10-hydroperoxy-(8E)-octadecenoate + 1-hexadecanoyl-sn-glycero-3-phosphocholine + H(+). Its function is as follows. Lipoprotein-associated calcium-independent phospholipase A2 involved in phospholipid catabolism during inflammatory and oxidative stress response. At the lipid-aqueous interface, hydrolyzes the ester bond of fatty acyl group attached at sn-2 position of phospholipids (phospholipase A2 activity). Specifically targets phospholipids with a short-chain fatty acyl group at sn-2 position. Can hydrolyze phospholipids with long fatty acyl chains, only if they carry oxidized functional groups. Hydrolyzes and inactivates platelet-activating factor (PAF, 1-O-alkyl-2-acetyl-sn-glycero-3-phosphocholine), a potent pro-inflammatory signaling lipid that acts through PTAFR on various innate immune cells. Hydrolyzes oxidatively truncated phospholipids carrying an aldehyde group at omega position, preventing their accumulation in low-density lipoprotein (LDL) particles and uncontrolled pro-inflammatory effects. As part of high-density lipoprotein (HDL) particles, can hydrolyze phospholipids having long-chain fatty acyl hydroperoxides at sn-2 position and protect against potential accumulation of these oxylipins in the vascular wall. Catalyzes the release from membrane phospholipids of F2-isoprostanes, lipid biomarkers of cellular oxidative damage. This Canis lupus familiaris (Dog) protein is Platelet-activating factor acetylhydrolase (PLA2G7).